We begin with the raw amino-acid sequence, 272 residues long: Dickkopf-related protein 1 (272 aa).

Positions 1 to 31 (MMVVCAAAAVRFLAVFTMMALCSLPLLGASA) are cleaved as a signal peptide. O-linked (GalNAc...) serine glycosylation occurs at Ser62. 10 disulfide bridges follow: Cys86-Cys98, Cys92-Cys114, Cys117-Cys131, Cys124-Cys136, Cys130-Cys141, Cys195-Cys207, Cys201-Cys216, Cys206-Cys243, Cys226-Cys251, and Cys245-Cys269. Residues 86–141 (CAEDEECGSDEYCSSPSRGAAGVGGVQICLACRKRRKRCMRHAMCCPGNYCKNGIC) form a DKK-type Cys-1 region. The segment at 195 to 269 (CLRSSDCAAG…ASNSSRLHTC (75 aa)) is DKK-type Cys-2. N-linked (GlcNAc...) asparagine glycosylation occurs at Asn262.

Belongs to the dickkopf family. Interacts (via the C-terminal Cys-rich domain) with LRP5 (via beta-propeller regions 3 and 4); the interaction, enhanced by MESD and or KREMEN, antagonizes Wnt-mediated signaling. Interacts with LRP6. Forms a ternary complex with LRP6 and KREM1. Interacts with KREM1.

It localises to the secreted. Antagonizes canonical Wnt signaling by inhibiting LRP5/6 interaction with Wnt and by forming a ternary complex with the transmembrane protein KREMEN that promotes internalization of LRP5/6. Inhibits the pro-apoptotic function of KREMEN1 in a Wnt-independent manner, and has anti-apoptotic activity. Plays a role in limb development; attenuates Wnt signaling in the developing limb to allow normal limb patterning. This is Dickkopf-related protein 1 (Dkk1) from Mus musculus (Mouse).